A 337-amino-acid polypeptide reads, in one-letter code: MQIVEQMKDKALAELNLVKDKKTLDDIRVKYLGKKGELTEMMKLIATLPNDEKPKLGQAVNIAKQALQEAINLKLANFEEQELNEKLAQEKIDITLSGVGQNQGSLHPVTKTLNRIEAFFKQNGFAIEFGPEIESDYYNFETLNIPSHHPARAMHDTFYIDETHVLRTHTSGVQIRTMEKQQPPIRIIAPGRVYRCDSDITHTPMFHQVEGLLVDKDVSFADLKGLLHVFLNSFFEKDLKVRFRPSYFPFTEPSAEADIECVMCDGKGCRVCKHTGWLEVLGCGMVHPKVLKAGNIDSEKYQGFAFGMGVERLSMLRYGIDDLRMFFENDLRFLKQF.

E252 contacts Mg(2+).

The protein belongs to the class-II aminoacyl-tRNA synthetase family. Phe-tRNA synthetase alpha subunit type 1 subfamily. In terms of assembly, tetramer of two alpha and two beta subunits. It depends on Mg(2+) as a cofactor.

Its subcellular location is the cytoplasm. The enzyme catalyses tRNA(Phe) + L-phenylalanine + ATP = L-phenylalanyl-tRNA(Phe) + AMP + diphosphate + H(+). The polypeptide is Phenylalanine--tRNA ligase alpha subunit (Francisella tularensis subsp. holarctica (strain OSU18)).